A 165-amino-acid polypeptide reads, in one-letter code: Phosphopantetheine adenylyltransferase (165 aa).

Position 9 (Thr-9) interacts with substrate. ATP contacts are provided by residues 9–10 and His-17; that span reads TF. Substrate is bound by residues Lys-41, Leu-73, and Arg-87. ATP-binding positions include 88-90, Glu-98, and 123-129; these read GLR and LQPIASR.

Belongs to the bacterial CoaD family. In terms of assembly, homohexamer. Mg(2+) is required as a cofactor.

It is found in the cytoplasm. The catalysed reaction is (R)-4'-phosphopantetheine + ATP + H(+) = 3'-dephospho-CoA + diphosphate. It functions in the pathway cofactor biosynthesis; coenzyme A biosynthesis; CoA from (R)-pantothenate: step 4/5. Reversibly transfers an adenylyl group from ATP to 4'-phosphopantetheine, yielding dephospho-CoA (dPCoA) and pyrophosphate. The protein is Phosphopantetheine adenylyltransferase of Rhizorhabdus wittichii (strain DSM 6014 / CCUG 31198 / JCM 15750 / NBRC 105917 / EY 4224 / RW1) (Sphingomonas wittichii).